The chain runs to 53 residues: MTESTLIIIASNVVTVFVSVAVNRTDISWLKQRLISLEERINKLGEKHVFNVG.

Residues 4–23 form a helical membrane-spanning segment; the sequence is STLIIIASNVVTVFVSVAVN. Positions 24–50 form a coiled coil; sequence RTDISWLKQRLISLEERINKLGEKHVF.

It localises to the host membrane. This is an uncharacterized protein from Pseudoalteromonas phage PM2 (Bacteriophage PM2).